The primary structure comprises 265 residues: Pro-opiomelanocortin (265 aa).

The signal sequence occupies residues 1–26; the sequence is MPRLCSSRSGALLLALLLQASMEVRG. 2 disulfides stabilise this stretch: C28–C50 and C34–C46. Residue T71 is glycosylated (O-linked (GalNAc...) threonine). At F87 the chain carries Phenylalanine amide. A disordered region spans residues 89-138; sequence RRNGSSSSGVGGAAQKREEEVAVGEGPGPRGDDAETGPREDKRSYSMEHF. Residue N91 is glycosylated (N-linked (GlcNAc...) asparagine). The propeptide occupies 106-129; that stretch reads EEEVAVGEGPGPRGDDAETGPRED. Over residues 118 to 138 the composition is skewed to basic and acidic residues; sequence RGDDAETGPREDKRSYSMEHF. S132 carries the N-acetylserine; in Corticotropin modification. Valine amide is present on V144. A Phosphoserine modification is found at S162. Pyrrolidone carboxylic acid (Glu); partial is present on E173. Position 200 is a sulfotyrosine (Y200). The interval 209-240 is disordered; that stretch reads EAAEKKDSGPYKMEHFRWGSPPKDKRYGGFMT. Basic and acidic residues predominate over residues 210–235; that stretch reads AAEKKDSGPYKMEHFRWGSPPKDKRY.

This sequence belongs to the POMC family. Specific enzymatic cleavages at paired basic residues yield the different active peptides. In terms of tissue distribution, ACTH and MSH are produced by the pituitary gland.

It localises to the secreted. Functionally, stimulates the adrenal glands to release cortisol. Its function is as follows. Anorexigenic peptide. Increases the pigmentation of skin by increasing melanin production in melanocytes. In terms of biological role, endogenous orexigenic opiate. Endogenous opiate. The sequence is that of Pro-opiomelanocortin (POMC) from Bos taurus (Bovine).